Here is an 86-residue protein sequence, read N- to C-terminus: Small ribosomal subunit protein bS20 (86 aa).

The protein belongs to the bacterial ribosomal protein bS20 family.

Its function is as follows. Binds directly to 16S ribosomal RNA. The chain is Small ribosomal subunit protein bS20 from Novosphingobium aromaticivorans (strain ATCC 700278 / DSM 12444 / CCUG 56034 / CIP 105152 / NBRC 16084 / F199).